Consider the following 144-residue polypeptide: Large ribosomal subunit protein uL16c (144 aa).

Belongs to the universal ribosomal protein uL16 family. Part of the 50S ribosomal subunit.

The protein localises to the plastid. It localises to the chloroplast. In Chara vulgaris (Common stonewort), this protein is Large ribosomal subunit protein uL16c.